The sequence spans 85 residues: Probable Thioredoxin (85 aa).

One can recognise a Glutaredoxin domain in the interval 2–85 (VVKIEVFTSP…LFEAISDEIE (84 aa)). Cys13 and Cys16 form a disulfide bridge.

This sequence belongs to the glutaredoxin family.

Its subcellular location is the cytoplasm. Its function is as follows. Does not function as a glutathione-disulfide oxidoreductase in the presence of glutathione and glutathione reductase. May be a component of a ribonucleotide-reducing system distinct from the previously described systems utilizing thioredoxin or glutaredoxin. The chain is Probable Thioredoxin from Methanothermobacter marburgensis (strain ATCC BAA-927 / DSM 2133 / JCM 14651 / NBRC 100331 / OCM 82 / Marburg) (Methanobacterium thermoautotrophicum).